The sequence spans 202 residues: Eukaryotic translation initiation factor isoform 4E (202 aa).

The segment at 1-24 is disordered; sequence MATEAPPPVDTTEVPPFTAAETAV. MRNA contacts are provided by residues 46-51, lysine 78, and 96-97; these read QGAAWG and WE. Cysteines 101 and 140 form a disulfide. MRNA is bound by residues 147-152 and 191-194; these read RRSQDK and KRER.

It belongs to the eukaryotic initiation factor 4E family. In terms of assembly, EIF4F is a multi-subunit complex, the composition of which varies with external and internal environmental conditions. It is composed of at least EIF4A, EIF4E and EIF4G. EIF4E is also known to interact with other partners. In higher plants two isoforms of EIF4F have been identified, named isoform EIF4F and isoform EIF(iso)4F. Isoform EIF4F has subunits p220 and p26, whereas isoform EIF(iso)4F has subunits p82 and p28. As to quaternary structure, (Microbial infection) Interacts with viral genome-linked protein (VPg); this interaction is possible in susceptible hosts but impaired in resistant plants. Post-translationally, according to the redox status, the Cys-101-Cys-140 disulfide bridge may have a role in regulating protein function by affecting its ability to bind capped mRNA.

Its subcellular location is the cytoplasm. It localises to the nucleus. In terms of biological role, component of the protein complex eIF4F, which is involved in the recognition of the mRNA cap, ATP-dependent unwinding of 5'-terminal secondary structure and recruitment of mRNA to the ribosome. Recognizes and binds the 7-methylguanosine-containing mRNA cap during an early step in the initiation of protein synthesis and facilitates ribosome binding by inducing the unwinding of the mRNAs secondary structures. Key component of recessive resistance to potyviruses. Its function is as follows. (Microbial infection) Susceptibility host factor required for viral infection by recruiting viral RNAs to the host ribosomal complex via an interaction with viral genome-linked protein (VPg). The sequence is that of Eukaryotic translation initiation factor isoform 4E from Capsicum annuum (Capsicum pepper).